An 838-amino-acid polypeptide reads, in one-letter code: Adenylate cyclase (838 aa).

The segment at 1–541 (MNYDLFSAQK…DLRLSFPVTV (541 aa)) is catalytic. A regulatory region spans residues 547 to 838 (EDLTHACEIR…VPFHSRLAMS (292 aa)).

It belongs to the adenylyl cyclase class-1 family.

It is found in the cytoplasm. The catalysed reaction is ATP = 3',5'-cyclic AMP + diphosphate. The protein is Adenylate cyclase (cya) of Pasteurella multocida (strain Pm70).